The following is a 276-amino-acid chain: Large ribosomal subunit protein uL2 (276 aa).

Residues 224-258 (VAMNPVDHPHGGGEGRTGEGRVPVSPWGTPTKGYR) form a disordered region. Over residues 230-242 (DHPHGGGEGRTGE) the composition is skewed to basic and acidic residues.

This sequence belongs to the universal ribosomal protein uL2 family. In terms of assembly, part of the 50S ribosomal subunit. Forms a bridge to the 30S subunit in the 70S ribosome.

Its function is as follows. One of the primary rRNA binding proteins. Required for association of the 30S and 50S subunits to form the 70S ribosome, for tRNA binding and peptide bond formation. It has been suggested to have peptidyltransferase activity; this is somewhat controversial. Makes several contacts with the 16S rRNA in the 70S ribosome. This is Large ribosomal subunit protein uL2 from Polynucleobacter necessarius subsp. necessarius (strain STIR1).